Consider the following 154-residue polypeptide: Small ribosomal subunit protein uS13 (154 aa).

The protein belongs to the universal ribosomal protein uS13 family.

The protein resides in the cytoplasm. Located at the top of the head of the 40S subunit, it contacts several helices of the 18S rRNA. The polypeptide is Small ribosomal subunit protein uS13 (rps18) (Dictyostelium discoideum (Social amoeba)).